Consider the following 463-residue polypeptide: A-type ATP synthase subunit B (463 aa).

The protein belongs to the ATPase alpha/beta chains family. As to quaternary structure, has multiple subunits with at least A(3), B(3), C, D, E, F, H, I and proteolipid K(x).

Its subcellular location is the cell membrane. Its function is as follows. Component of the A-type ATP synthase that produces ATP from ADP in the presence of a proton gradient across the membrane. The B chain is a regulatory subunit. This chain is A-type ATP synthase subunit B, found in Aeropyrum pernix (strain ATCC 700893 / DSM 11879 / JCM 9820 / NBRC 100138 / K1).